The following is a 374-amino-acid chain: Putative F-box/kelch-repeat protein At4g39756 (374 aa).

The F-box domain occupies 17–63; the sequence is CPSFLSLPEEILVNCLARIPKSYYPKLSLVCKSFCSLILSMELYVER. 4 Kelch repeats span residues 135–180, 181–227, 231–278, and 280–308; these read ELYA…VING, KIYV…GMAV, KIYV…RQSC, and WYDT…ILEV.

This is Putative F-box/kelch-repeat protein At4g39756 from Arabidopsis thaliana (Mouse-ear cress).